The sequence spans 85 residues: Putative transmembrane protein ORF28 (85 aa).

2 helical membrane passes run 32–52 and 59–79; these read IMLL…VQIV and LLSV…MLGI.

It is found in the host membrane. The chain is Putative transmembrane protein ORF28 from Haloarcula hispanica (His1V).